The chain runs to 281 residues: Nucleotide-binding protein CTN_0898 (281 aa).

9-16 (GLSGAGKT) provides a ligand contact to ATP. 58–61 (DVRS) provides a ligand contact to GTP.

This sequence belongs to the RapZ-like family.

Functionally, displays ATPase and GTPase activities. The sequence is that of Nucleotide-binding protein CTN_0898 from Thermotoga neapolitana (strain ATCC 49049 / DSM 4359 / NBRC 107923 / NS-E).